Reading from the N-terminus, the 175-residue chain is Cytochrome c homolog (175 aa).

Over 1-8 (MTGKELNK) the chain is Cytoplasmic. Residues 9–29 (IVAAILFASLIAMIVGFIANI) traverse the membrane as a helical; Signal-anchor segment. The Periplasmic portion of the chain corresponds to 30–175 (LYKPNLHVLH…LFLKNYVHDQ (146 aa)). C84, C87, H88, and M150 together coordinate heme c.

Belongs to the cytochrome c family. Post-translationally, binds 1 heme c group covalently per subunit.

It localises to the cell membrane. In terms of biological role, may be involved in electron transfer from bc1 complex to aa3. The sequence is that of Cytochrome c homolog (cycM) from Rickettsia prowazekii (strain Madrid E).